Reading from the N-terminus, the 458-residue chain is 5-hydroxytryptamine receptor 2C (458 aa).

The signal sequence occupies residues 1–32 (MVNLRNAVHSFLVHLIGLLVWQSDISVSPVAA). The Extracellular portion of the chain corresponds to 33-55 (IVTDIFNTSDGGRFKFPDGVQNW). N-linked (GlcNAc...) asparagine glycosylation is present at N39. A helical membrane pass occupies residues 56-80 (PALSIVIIIIMTIGGNILVIMAVSM). Residues 81–86 (EKKLHN) lie on the Cytoplasmic side of the membrane. The helical transmembrane segment at 87-111 (ATNYFLMSLAIADMLVGLLVMPLSL) threads the bilayer. The Extracellular portion of the chain corresponds to 112-128 (LAILYDYVWPLPRYLCP). Cysteines 127 and 207 form a disulfide. Residues 129–151 (VWISLDVLFSTASIMHLCAISLD) form a helical membrane-spanning segment. An ergotamine-binding site is contributed by T139. A DRY motif; important for ligand-induced conformation changes motif is present at residues 151–153 (DRY). Topologically, residues 152-167 (RYVAIRNPIEHSRFNS) are cytoplasmic. Residues 168 to 189 (RTKAIMKIAIVWAISIGVSVPI) form a helical membrane-spanning segment. The Extracellular portion of the chain corresponds to 190 to 213 (PVIGLRDEEKVFVNNTTCVLNDPN). N204 carries an N-linked (GlcNAc...) asparagine glycan. L209 serves as a coordination point for ergotamine. A helical membrane pass occupies residues 214–236 (FVLIGSFVAFFIPLTIMVITYCL). The Cytoplasmic portion of the chain corresponds to 237-311 (TIYVLRRQAL…AINNERKASK (75 aa)). Positions 274-301 (EENSANPNQDQNARRRKKKERRPRGTMQ) are disordered. Positions 287–297 (RRRKKKERRPR) are enriched in basic residues. A helical transmembrane segment spans residues 312 to 336 (VLGIVFFVFLIMWCPFFITNILSVL). C337 and C341 are joined by a disulfide. Topologically, residues 337–347 (CEKSCNQKLME) are extracellular. The helical transmembrane segment at 348–370 (KLLNVFVWIGYVCSGINPLVYTL) threads the bilayer. An NPxxY motif; important for ligand-induced conformation changes and signaling motif is present at residues 364–368 (NPLVY). The Cytoplasmic segment spans residues 371 to 458 (FNKIYRRAFS…SVVSERISSV (88 aa)). The short motif at 456–458 (SSV) is the PDZ-binding element.

Belongs to the G-protein coupled receptor 1 family. Interacts with MPDZ. Interacts with ARRB2. Interacts with MPP3; this interaction stabilizes the receptor at the plasma membrane and prevents the desensitization of the HTR2C receptor-mediated calcium response. In terms of processing, N-glycosylated. Detected in brain.

It localises to the cell membrane. Inhibited by inverse agonist ritanserin. Functionally, G-protein coupled receptor for 5-hydroxytryptamine (serotonin). Also functions as a receptor for various drugs and psychoactive substances, including ergot alkaloid derivatives, 1-2,5,-dimethoxy-4-iodophenyl-2-aminopropane (DOI) and lysergic acid diethylamide (LSD). Ligand binding causes a conformation change that triggers signaling via guanine nucleotide-binding proteins (G proteins) and modulates the activity of downstream effectors. HTR2C is coupled to G(q)/G(11) G alpha proteins and activates phospholipase C-beta, releasing diacylglycerol (DAG) and inositol 1,4,5-trisphosphate (IP3) second messengers that modulate the activity of phosphatidylinositol 3-kinase and promote the release of Ca(2+) ions from intracellular stores, respectively. Beta-arrestin family members inhibit signaling via G proteins and mediate activation of alternative signaling pathways. Regulates neuronal activity via the activation of short transient receptor potential calcium channels in the brain, and thereby modulates the activation of pro-opiomelanocortin neurons and the release of CRH that then regulates the release of corticosterone. Plays a role in the regulation of appetite and eating behavior, responses to anxiogenic stimuli and stress. Plays a role in insulin sensitivity and glucose homeostasis. The chain is 5-hydroxytryptamine receptor 2C from Homo sapiens (Human).